Here is a 72-residue protein sequence, read N- to C-terminus: Translation initiation factor IF-1 (72 aa).

Positions 2–72 (AKDDVIEVDG…TRGRITYRFK (71 aa)) constitute an S1-like domain.

Belongs to the IF-1 family. As to quaternary structure, component of the 30S ribosomal translation pre-initiation complex which assembles on the 30S ribosome in the order IF-2 and IF-3, IF-1 and N-formylmethionyl-tRNA(fMet); mRNA recruitment can occur at any time during PIC assembly.

The protein localises to the cytoplasm. In terms of biological role, one of the essential components for the initiation of protein synthesis. Stabilizes the binding of IF-2 and IF-3 on the 30S subunit to which N-formylmethionyl-tRNA(fMet) subsequently binds. Helps modulate mRNA selection, yielding the 30S pre-initiation complex (PIC). Upon addition of the 50S ribosomal subunit IF-1, IF-2 and IF-3 are released leaving the mature 70S translation initiation complex. The protein is Translation initiation factor IF-1 of Lactococcus lactis subsp. lactis (strain IL1403) (Streptococcus lactis).